The following is a 505-amino-acid chain: L-amino-acid oxidase (505 aa).

Residues 1 to 18 form the signal peptide; that stretch reads MNVFLMFSLLFLAALGSC. Cysteines 28 and 191 form a disulfide. FAD-binding positions include 61-62, 81-82, Arg89, and 105-108; these read MS, EA, and GPMR. Residue Arg108 coordinates substrate. N-linked (GlcNAc...) asparagine glycosylation occurs at Asn190. Substrate is bound at residue His241. An FAD-binding site is contributed by Val279. A disulfide bridge connects residues Cys349 and Cys430. N-linked (GlcNAc...) asparagine glycosylation occurs at Asn379. Residue Tyr390 coordinates substrate. FAD-binding positions include Glu475 and 482–487; that span reads GWIDST. 482-483 serves as a coordination point for substrate; it reads GW.

It belongs to the flavin monoamine oxidase family. FIG1 subfamily. Monomer. This is in contrast with most of its orthologs, that are non-covalently linked homodimers. FAD is required as a cofactor. In terms of processing, N-glycosylated. As to expression, expressed by the venom gland.

It is found in the secreted. It catalyses the reaction an L-alpha-amino acid + O2 + H2O = a 2-oxocarboxylate + H2O2 + NH4(+). The catalysed reaction is L-leucine + O2 + H2O = 4-methyl-2-oxopentanoate + H2O2 + NH4(+). Functionally, catalyzes an oxidative deamination of predominantly hydrophobic and aromatic L-amino acids, thus producing hydrogen peroxide that may contribute to the diverse toxic effects of this enzyme. Shows activity on L-Leu. Exhibits diverse biological activities, such as hemorrhage, edema, antibacterial and antiparasitic activities, as well as regulation of platelet aggregation. Effects of snake L-amino oxidases on platelets are controversial, since they either induce aggregation or inhibit agonist-induced aggregation. These different effects are probably due to different experimental conditions. This protein has an ability to induce hemolysis and apoptosis. This is L-amino-acid oxidase from Protobothrops flavoviridis (Habu).